Reading from the N-terminus, the 570-residue chain is Formate--tetrahydrofolate ligase (570 aa).

Residue 65–72 participates in ATP binding; that stretch reads TPYGEGKT.

It belongs to the formate--tetrahydrofolate ligase family.

It catalyses the reaction (6S)-5,6,7,8-tetrahydrofolate + formate + ATP = (6R)-10-formyltetrahydrofolate + ADP + phosphate. The protein operates within one-carbon metabolism; tetrahydrofolate interconversion. The chain is Formate--tetrahydrofolate ligase from Shewanella piezotolerans (strain WP3 / JCM 13877).